The primary structure comprises 271 residues: GATA transcription factor 19 (271 aa).

The interval 1 to 23 (MAAEPPADGRDPPADDGAAGDGA) is disordered. Positions 33 to 68 (LSAASEQLTLVYQGEVYVFDPVPPQKVQAVLLVLGG) constitute a Tify domain. In terms of domain architecture, CCT spans 95-137 (RIASLMRFREKRKERCFDKKIRYSVRKEVAQKMKRRKGQFAGR). A GATA-type zinc finger spans residues 166 to 193 (CQNCGISSRLTPAMRRGPAGPRSLCNAC). The interval 238-271 (NQTTMKTDTEMVPEQEQKADVLPPTKEEDSMATS) is disordered. The span at 252-271 (QEQKADVLPPTKEEDSMATS) shows a compositional bias: basic and acidic residues.

Belongs to the type IV zinc-finger family. Class C subfamily.

It localises to the nucleus. Functionally, transcriptional activator that specifically binds 5'-GATA-3' or 5'-GAT-3' motifs within gene promoters. The sequence is that of GATA transcription factor 19 from Oryza sativa subsp. indica (Rice).